A 186-amino-acid chain; its full sequence is Low amplitude and bright protein LabA (186 aa).

Its function is as follows. Functions in an output pathway of the circadian clock. One of three clock output pathways. Involved in negative feedback regulation of KaiC; deletion leads to overexpression of KaiC protein and decreases the amplitude of the circadian response. Overexpression reduces the expression of circadian genes. This chain is Low amplitude and bright protein LabA, found in Synechococcus elongatus (strain ATCC 33912 / PCC 7942 / FACHB-805) (Anacystis nidulans R2).